Reading from the N-terminus, the 467-residue chain is Glycosyl hydrolase family 109 protein (467 aa).

Positions 1 to 31 (MKNFNRRAFLKAAGATTAGLVTSGLILPASA) form a signal peptide, tat-type signal. NAD(+) is bound by residues 66-67 (QR), Asp-88, 137-140 (WQWH), 157-158 (EV), and Asn-186. Substrate-binding positions include Tyr-215, Arg-234, 246-249 (YPTH), and Tyr-328. Residue Tyr-246 participates in NAD(+) binding.

The protein belongs to the Gfo/Idh/MocA family. Glycosyl hydrolase 109 subfamily. The cofactor is NAD(+). Post-translationally, predicted to be exported by the Tat system. The position of the signal peptide cleavage has not been experimentally proven.

In terms of biological role, glycosidase. The polypeptide is Glycosyl hydrolase family 109 protein (Shewanella woodyi (strain ATCC 51908 / MS32)).